We begin with the raw amino-acid sequence, 340 residues long: Ribosomal RNA large subunit methyltransferase F (340 aa).

A disordered region spans residues 1–36 (MNAPRTPKPARKKPDSATPAKPVEPRKEASLHPRNR).

This sequence belongs to the methyltransferase superfamily. METTL16/RlmF family.

It is found in the cytoplasm. The catalysed reaction is adenosine(1618) in 23S rRNA + S-adenosyl-L-methionine = N(6)-methyladenosine(1618) in 23S rRNA + S-adenosyl-L-homocysteine + H(+). Its function is as follows. Specifically methylates the adenine in position 1618 of 23S rRNA. In Pseudomonas fluorescens (strain Pf0-1), this protein is Ribosomal RNA large subunit methyltransferase F.